Here is a 347-residue protein sequence, read N- to C-terminus: MLGSIPVLVNRSGSDSNKFQATDQKWSYTDLQSDQTKLNLSAYGEVNGLLNPALVETYFGTTRTSSTANQNSTTVPGIGFKIPEQNNDSKATLITPGLAWTPQDVGNLVVSGTTVSFQLGGWLVTFTDFVKPRAGYLGLQLSGLNASDSDQRELIWAPRPWAAFRGSWVNRLGRVESVWDLKGVWADQAQLAAQAATSSTTTTATGATLPEHPNALAYQISYTDKDSYKASTQGSGQTNSQNNSLYLHLIKPKKVESTTQLDQGLKNLLDPNQVRTKLRQSFGTDHSTQPQPQSLKTTTPVFGAMSGNLGSVLSGGGAGGAGSTNSVDLSPVERVSGSLTINRNFSY.

Residues 282–300 show a composition bias toward polar residues; it reads FGTDHSTQPQPQSLKTTTP. Residues 282-302 form a disordered region; sequence FGTDHSTQPQPQSLKTTTPVF.

Belongs to the adhesin P1 family.

This chain is Putative adhesin P1-like protein MPN_099, found in Mycoplasma pneumoniae (strain ATCC 29342 / M129 / Subtype 1) (Mycoplasmoides pneumoniae).